Reading from the N-terminus, the 333-residue chain is L-lactate dehydrogenase B chain (333 aa).

Residues 29–57 (GQVG…LEDK) and arginine 99 contribute to the NAD(+) site. Residues arginine 106, asparagine 138, and arginine 169 each coordinate substrate. NAD(+) is bound at residue asparagine 138. Histidine 193 acts as the Proton acceptor in catalysis. A substrate-binding site is contributed by threonine 248.

This sequence belongs to the LDH/MDH superfamily. LDH family. Homotetramer.

Its subcellular location is the cytoplasm. The catalysed reaction is (S)-lactate + NAD(+) = pyruvate + NADH + H(+). Its pathway is fermentation; pyruvate fermentation to lactate; (S)-lactate from pyruvate: step 1/1. Functionally, interconverts simultaneously and stereospecifically pyruvate and lactate with concomitant interconversion of NADH and NAD(+). The chain is L-lactate dehydrogenase B chain (LDHB) from Anas platyrhynchos (Mallard).